Consider the following 548-residue polypeptide: Luciferin 4-monooxygenase (548 aa).

A Microbody targeting signal motif is present at residues 546-548 (AKM).

The protein belongs to the ATP-dependent AMP-binding enzyme family. Mg(2+) serves as cofactor.

It localises to the peroxisome. It carries out the reaction firefly D-luciferin + ATP + O2 = firefly oxyluciferin + hnu + AMP + CO2 + diphosphate. Produces green light with a wavelength of 544 nm. This Nipponoluciola cruciata (Genji firefly) protein is Luciferin 4-monooxygenase.